We begin with the raw amino-acid sequence, 535 residues long: Bifunctional purine biosynthesis protein PurH (535 aa).

An MGS-like domain is found at 6 to 151 (TRLPIRRALI…KNHKDVAIVV (146 aa)).

The protein belongs to the PurH family.

It carries out the reaction (6R)-10-formyltetrahydrofolate + 5-amino-1-(5-phospho-beta-D-ribosyl)imidazole-4-carboxamide = 5-formamido-1-(5-phospho-D-ribosyl)imidazole-4-carboxamide + (6S)-5,6,7,8-tetrahydrofolate. The enzyme catalyses IMP + H2O = 5-formamido-1-(5-phospho-D-ribosyl)imidazole-4-carboxamide. It functions in the pathway purine metabolism; IMP biosynthesis via de novo pathway; 5-formamido-1-(5-phospho-D-ribosyl)imidazole-4-carboxamide from 5-amino-1-(5-phospho-D-ribosyl)imidazole-4-carboxamide (10-formyl THF route): step 1/1. It participates in purine metabolism; IMP biosynthesis via de novo pathway; IMP from 5-formamido-1-(5-phospho-D-ribosyl)imidazole-4-carboxamide: step 1/1. The polypeptide is Bifunctional purine biosynthesis protein PurH (Pseudomonas fluorescens (strain SBW25)).